We begin with the raw amino-acid sequence, 329 residues long: MTQLFYDTDADLSLLNNKTIAIIGYGSQGHAHALNLKDSGMDVIVGLYKGSKSESKAINDGLEVFTVSEACEKADWIMILLPDEFQKDVYIKEIEPNLKEGKILSFAHGFNIRFGLIKPPSFVDVVMIAPKGPGHTVRWEYQNGQGVPALFAVEQDYSSNARSLAMAYAKGIGGTRAGILETNFKEETETDLFGEQAVLCGGLSELVKSGFETLVEAGYQPELAYFECLHEVKLIVDLMVKGGLSQMRDSISNTAEYGDYVSGKRLINSDTKKEMQKILKDIQDGTFAKNFVEECDRDKPLMTKLRAENSQHEIEKVGKGLRAMFSWLK.

Positions 2–182 (TQLFYDTDAD…GGTRAGILET (181 aa)) constitute a KARI N-terminal Rossmann domain. NADP(+) is bound by residues 25–28 (YGSQ), S51, S53, and 83–86 (DEFQ). H108 is a catalytic residue. G134 lines the NADP(+) pocket. The KARI C-terminal knotted domain maps to 183–328 (NFKEETETDL…KGLRAMFSWL (146 aa)). Residues D191, E195, E227, and E231 each contribute to the Mg(2+) site. S252 lines the substrate pocket.

The protein belongs to the ketol-acid reductoisomerase family. Requires Mg(2+) as cofactor.

The enzyme catalyses (2R)-2,3-dihydroxy-3-methylbutanoate + NADP(+) = (2S)-2-acetolactate + NADPH + H(+). It catalyses the reaction (2R,3R)-2,3-dihydroxy-3-methylpentanoate + NADP(+) = (S)-2-ethyl-2-hydroxy-3-oxobutanoate + NADPH + H(+). It participates in amino-acid biosynthesis; L-isoleucine biosynthesis; L-isoleucine from 2-oxobutanoate: step 2/4. Its pathway is amino-acid biosynthesis; L-valine biosynthesis; L-valine from pyruvate: step 2/4. Functionally, involved in the biosynthesis of branched-chain amino acids (BCAA). Catalyzes an alkyl-migration followed by a ketol-acid reduction of (S)-2-acetolactate (S2AL) to yield (R)-2,3-dihydroxy-isovalerate. In the isomerase reaction, S2AL is rearranged via a Mg-dependent methyl migration to produce 3-hydroxy-3-methyl-2-ketobutyrate (HMKB). In the reductase reaction, this 2-ketoacid undergoes a metal-dependent reduction by NADPH to yield (R)-2,3-dihydroxy-isovalerate. This Prochlorococcus marinus (strain MIT 9515) protein is Ketol-acid reductoisomerase (NADP(+)).